Consider the following 132-residue polypeptide: Small ribosomal subunit protein uS8 (132 aa).

The protein belongs to the universal ribosomal protein uS8 family. Part of the 30S ribosomal subunit. Contacts proteins S5 and S12.

Its function is as follows. One of the primary rRNA binding proteins, it binds directly to 16S rRNA central domain where it helps coordinate assembly of the platform of the 30S subunit. The chain is Small ribosomal subunit protein uS8 from Micrococcus luteus (strain ATCC 4698 / DSM 20030 / JCM 1464 / CCM 169 / CCUG 5858 / IAM 1056 / NBRC 3333 / NCIMB 9278 / NCTC 2665 / VKM Ac-2230) (Micrococcus lysodeikticus).